Reading from the N-terminus, the 68-residue chain is KCNQ1 downstream neighbor protein (68 aa).

Residues 28–68 form a disordered region; that stretch reads GVASGCSPSKASQEARGKEKCPTLNGQPQWSALFTLPPQRE.

As to expression, shows reduced expression in Wilms' tumor samples.

This Homo sapiens (Human) protein is KCNQ1 downstream neighbor protein (KCNQ1DN).